A 283-amino-acid polypeptide reads, in one-letter code: NAD kinase (283 aa).

The Proton acceptor role is filled by Asp-73. Residues 73–74 (DG), 146–147 (NE), His-157, His-176, Asp-178, 189–194 (TAYNLS), and Ala-213 each bind NAD(+).

It belongs to the NAD kinase family. Requires a divalent metal cation as cofactor.

It localises to the cytoplasm. The catalysed reaction is NAD(+) + ATP = ADP + NADP(+) + H(+). Involved in the regulation of the intracellular balance of NAD and NADP, and is a key enzyme in the biosynthesis of NADP. Catalyzes specifically the phosphorylation on 2'-hydroxyl of the adenosine moiety of NAD to yield NADP. The protein is NAD kinase of Haloarcula marismortui (strain ATCC 43049 / DSM 3752 / JCM 8966 / VKM B-1809) (Halobacterium marismortui).